A 301-amino-acid polypeptide reads, in one-letter code: m7GpppX diphosphatase (301 aa).

Residues glutamate 154, lysine 176, and 237-248 (HYQPSFYHLHVH) each bind substrate. The short motif at 244-248 (HLHVH) is the Histidine triad motif element. Histidine 246 functions as the Nucleophile in the catalytic mechanism.

This sequence belongs to the HIT family.

It is found in the nucleus. The enzyme catalyses a 5'-end (N(7)-methyl 5'-triphosphoguanosine)-ribonucleoside in mRNA + H2O = N(7)-methyl-GMP + a 5'-end diphospho-ribonucleoside in mRNA + 2 H(+). It catalyses the reaction a 5'-end (N(2),N(2),N(7)-trimethyl 5'-triphosphoguanosine)-ribonucleoside in mRNA + H2O = (N(2),N(2),N(7))-trimethyl-GMP + a 5'-end diphospho-ribonucleoside in mRNA + 2 H(+). The hydrolytic product 7-methylguanosine diphosphate (m7GDP) efficiently inhibits the decapping scavenger activity and acts as a competitive inhibitor in vitro. Functionally, decapping scavenger enzyme that catalyzes the cleavage of a residual cap structure following the degradation of mRNAs of the 3'-&gt;5' exosome-mediated mRNA decay pathway. Hydrolyzes cap analog structures like 7-methylguanosine nucleoside triphosphate (m7GpppG) and tri-methyl guanosine nucleoside triphosphate (m3(2,2,7)GpppG) with up to 2 nucleotide substrates (small capped oligoribonucleotides) and specifically releases 5'-phosphorylated RNA fragments and 7-methylguanosine monophosphate (m7GMP). Does not hydrolyze unmethylated cap analog (GpppG) and shows no decapping activity on intact m7GpppG-capped mRNA molecules. Does not hydrolyze 7-methylguanosine diphosphate (m7GDP) and tri-methylguanosine diphosphate (m3(2,2,7)GDP) to m(7)GMP and m3(2,2,7)GMP, respectively. May also play a role in the 5'-&gt;3 mRNA decay pathway; m7GDP, the downstream product released by the 5'-&gt;3' mRNA mediated decapping activity, may be also converted by dcs-1 to m7GMP. Binds to m7GpppG and strongly to m7GDP. The sequence is that of m7GpppX diphosphatase from Ascaris suum (Pig roundworm).